A 286-amino-acid chain; its full sequence is Phosphoribosylaminoimidazole-succinocarboxamide synthase (286 aa).

It belongs to the SAICAR synthetase family.

The enzyme catalyses 5-amino-1-(5-phospho-D-ribosyl)imidazole-4-carboxylate + L-aspartate + ATP = (2S)-2-[5-amino-1-(5-phospho-beta-D-ribosyl)imidazole-4-carboxamido]succinate + ADP + phosphate + 2 H(+). It functions in the pathway purine metabolism; IMP biosynthesis via de novo pathway; 5-amino-1-(5-phospho-D-ribosyl)imidazole-4-carboxamide from 5-amino-1-(5-phospho-D-ribosyl)imidazole-4-carboxylate: step 1/2. This chain is Phosphoribosylaminoimidazole-succinocarboxamide synthase, found in Actinobacillus succinogenes (strain ATCC 55618 / DSM 22257 / CCUG 43843 / 130Z).